A 487-amino-acid chain; its full sequence is Protein nucleotidyltransferase YdiU (487 aa).

Residues Gly-90, Gly-92, Arg-93, Lys-113, Asp-125, Gly-126, Arg-176, and Arg-183 each coordinate ATP. Asp-252 (proton acceptor) is an active-site residue. Asn-253 and Asp-262 together coordinate Mg(2+). Position 262 (Asp-262) interacts with ATP.

The protein belongs to the SELO family. Requires Mg(2+) as cofactor. Mn(2+) serves as cofactor.

It carries out the reaction L-seryl-[protein] + ATP = 3-O-(5'-adenylyl)-L-seryl-[protein] + diphosphate. The catalysed reaction is L-threonyl-[protein] + ATP = 3-O-(5'-adenylyl)-L-threonyl-[protein] + diphosphate. The enzyme catalyses L-tyrosyl-[protein] + ATP = O-(5'-adenylyl)-L-tyrosyl-[protein] + diphosphate. It catalyses the reaction L-histidyl-[protein] + UTP = N(tele)-(5'-uridylyl)-L-histidyl-[protein] + diphosphate. It carries out the reaction L-seryl-[protein] + UTP = O-(5'-uridylyl)-L-seryl-[protein] + diphosphate. The catalysed reaction is L-tyrosyl-[protein] + UTP = O-(5'-uridylyl)-L-tyrosyl-[protein] + diphosphate. Nucleotidyltransferase involved in the post-translational modification of proteins. It can catalyze the addition of adenosine monophosphate (AMP) or uridine monophosphate (UMP) to a protein, resulting in modifications known as AMPylation and UMPylation. This Pseudomonas syringae pv. syringae (strain B728a) protein is Protein nucleotidyltransferase YdiU.